A 121-amino-acid polypeptide reads, in one-letter code: General odorant-binding protein 72 (121 aa).

Disulfide bonds link Cys-45–Cys-101 and Cys-90–Cys-110.

This sequence belongs to the PBP/GOBP family.

Its subcellular location is the secreted. In terms of biological role, present in the aqueous fluid surrounding olfactory sensory dendrites and are thought to aid in the capture and transport of hydrophobic odorants into and through this fluid. The sequence is that of General odorant-binding protein 72 (Obp72) from Anopheles gambiae (African malaria mosquito).